Consider the following 90-residue polypeptide: Bombyxin B-12 (90 aa).

The N-terminal stretch at 1–20 (MMKTTIMFMLVVVISLTYSS) is a signal peptide. 3 cysteine pairs are disulfide-bonded: Cys-30-Cys-76, Cys-42-Cys-89, and Cys-75-Cys-80. The propeptide at 49–67 (SGAQYAPYFWTRQYLGSRG) is c peptide like.

Belongs to the insulin family. In terms of assembly, heterodimer of a B chain and an A chain linked by two disulfide bonds.

Its subcellular location is the secreted. Brain peptide responsible for activation of prothoracic glands to produce ecdysone in insects. The sequence is that of Bombyxin B-12 (BBXB12) from Bombyx mori (Silk moth).